We begin with the raw amino-acid sequence, 437 residues long: MSVSARSAAAEERSVNSSTMVAQQKNLEGYVGFANLPNQVYRKSVKRGFEFTLMVVGESGLGKSTLINSLFLTDLYSPEYPGPSHRIKKTVQVEQSKVLIKEGGVQLLLTIVDTPGFGDAVDNSNCWQPVIDYIDSKFEDYLNAESRVNRRQMPDNRVQCCLYFIAPSGHGLKPLDIEFMKRLHEKVNIIPLIAKADTLTPEECQQFKKQIMKEIQEHKIKIYEFPETDDEEENKLVKKIKDRLPLAVVGSNTIIEVNGKRVRGRQYPWGVAEVENGEHCDFTILRNMLIRTHMQDLKDVTNNVHYENYRSRKLAAVTYNGVDNNKNKGQLTKSPLAQMEEERREHVAKMKKMEMEMEQVFEMKVKEKVQKLKDSEAELQRRHEQMKKNLEAQHKELEEKRRQFEDEKANWEAQQRILEQQNSSRTLEKNKKKGKIF.

An N-acetylserine modification is found at S2. Y30 is modified (phosphotyrosine). The 270-residue stretch at 47-316 (RGFEFTLMVV…ENYRSRKLAA (270 aa)) folds into the Septin-type G domain. Residues 47–317 (RGFEFTLMVV…NYRSRKLAAV (271 aa)) form an interaction with SEPTIN12 region. A G1 motif region spans residues 57–64 (GESGLGKS). Residue 57 to 64 (GESGLGKS) participates in GTP binding. Residue S77 is modified to Phosphoserine. Residues T90, G116, and 195 to 203 (KADTLTPEE) each bind GTP. Positions 113–116 (DTPG) are G3 motif. Residues 194 to 197 (AKAD) form a G4 motif region. Phosphothreonine is present on T228. GTP contacts are provided by G250 and R265. The stretch at 332–433 (TKSPLAQMEE…SRTLEKNKKK (102 aa)) forms a coiled coil. S334 bears the Phosphoserine mark. N6-acetyllysine is present on K373. The span at 378–410 (ELQRRHEQMKKNLEAQHKELEEKRRQFEDEKAN) shows a compositional bias: basic and acidic residues. The tract at residues 378–437 (ELQRRHEQMKKNLEAQHKELEEKRRQFEDEKANWEAQQRILEQQNSSRTLEKNKKKGKIF) is disordered. S424 bears the Phosphoserine mark. T426 is modified (phosphothreonine).

This sequence belongs to the TRAFAC class TrmE-Era-EngA-EngB-Septin-like GTPase superfamily. Septin GTPase family. As to quaternary structure, septins polymerize into heterooligomeric protein complexes that form filaments, and associate with cellular membranes, actin filaments and microtubules. GTPase activity is required for filament formation. Filaments are assembled from asymmetrical heterotrimers, composed of SEPTIN2, SEPTIN6 and SEPTIN7 that associate head-to-head to form a hexameric unit. Within the trimer, directly interacts with SEPTIN6, while interaction with SEPTIN2 seems indirect. In the absence of SEPTIN6, forms homodimers. Interacts directly with CENPE and links CENPE to septin filaments composed of SEPTIN2, SEPTIN6 and SEPTIN7. Interacts with SEPTIN5, SEPTIN8, SEPTIN9 and SEPTIN11. Component of a septin core octameric complex consisting of SEPTIN12, SEPTIN7, SEPTIN6 and SEPTIN2 or SEPTIN4 in the order 12-7-6-2-2-6-7-12 or 12-7-6-4-4-6-7-12 and located in the sperm annulus; the SEPTIN12:SEPTIN7 association is mediated by the respective GTP-binding domains.

Its subcellular location is the cytoplasm. It localises to the chromosome. It is found in the centromere. The protein resides in the kinetochore. The protein localises to the cytoskeleton. Its subcellular location is the spindle. It localises to the cleavage furrow. It is found in the midbody. The protein resides in the cilium axoneme. The protein localises to the cell projection. Its subcellular location is the cilium. It localises to the flagellum. Its function is as follows. Filament-forming cytoskeletal GTPase. Required for normal organization of the actin cytoskeleton. Required for normal progress through mitosis. Involved in cytokinesis. Required for normal association of CENPE with the kinetochore. Plays a role in ciliogenesis and collective cell movements. Forms a filamentous structure with SEPTIN12, SEPTIN6, SEPTIN2 and probably SEPTIN4 at the sperm annulus which is required for the structural integrity and motility of the sperm tail during postmeiotic differentiation. The sequence is that of Septin-7 from Bos taurus (Bovine).